The chain runs to 204 residues: Large ribosomal subunit protein uL4 (204 aa).

The tract at residues 49 to 74 is disordered; sequence AKKRGEVSGGGKKPWSQKGGGRARAG. The segment covering 55–71 has biased composition (gly residues); the sequence is VSGGGKKPWSQKGGGRA.

This sequence belongs to the universal ribosomal protein uL4 family. Part of the 50S ribosomal subunit.

Its function is as follows. One of the primary rRNA binding proteins, this protein initially binds near the 5'-end of the 23S rRNA. It is important during the early stages of 50S assembly. It makes multiple contacts with different domains of the 23S rRNA in the assembled 50S subunit and ribosome. In terms of biological role, forms part of the polypeptide exit tunnel. This chain is Large ribosomal subunit protein uL4, found in Wolinella succinogenes (strain ATCC 29543 / DSM 1740 / CCUG 13145 / JCM 31913 / LMG 7466 / NCTC 11488 / FDC 602W) (Vibrio succinogenes).